Here is a 225-residue protein sequence, read N- to C-terminus: uncharacterized protein (225 aa).

E69, E71, and D100 together coordinate a divalent metal cation.

The protein belongs to the FAH family.

This is an uncharacterized protein from Pyrococcus abyssi (strain GE5 / Orsay).